The following is a 234-amino-acid chain: Bromodomain-containing protein DDB_G0271118 (234 aa).

One can recognise a Bromo domain in the interval 1 to 60 (MDLGTIKGELDNNGYSTIKDFTADVRLMFENALTYNADSSPIWKHAKTLLYFHRKHDEHV). Positions 134–194 (NNNSNNNNNN…SSSSSSSSSS (61 aa)) are enriched in low complexity. Positions 134–209 (NNNSNNNNNN…KKYSDEERRN (76 aa)) are disordered.

This Dictyostelium discoideum (Social amoeba) protein is Bromodomain-containing protein DDB_G0271118.